Reading from the N-terminus, the 192-residue chain is GTP cyclohydrolase-2 (192 aa).

Residue 50–54 (RLHSE) participates in GTP binding. Zn(2+) contacts are provided by Cys55, Cys66, and Cys68. GTP-binding positions include 92 to 94 (EGR) and Thr114. Asp126 (proton acceptor) is an active-site residue. Catalysis depends on Arg128, which acts as the Nucleophile. GTP-binding residues include Thr149 and Lys154.

The protein belongs to the GTP cyclohydrolase II family. It depends on Zn(2+) as a cofactor.

The catalysed reaction is GTP + 4 H2O = 2,5-diamino-6-hydroxy-4-(5-phosphoribosylamino)-pyrimidine + formate + 2 phosphate + 3 H(+). The protein operates within cofactor biosynthesis; riboflavin biosynthesis; 5-amino-6-(D-ribitylamino)uracil from GTP: step 1/4. Its function is as follows. Catalyzes the conversion of GTP to 2,5-diamino-6-ribosylamino-4(3H)-pyrimidinone 5'-phosphate (DARP), formate and pyrophosphate. In Helicobacter pylori (strain J99 / ATCC 700824) (Campylobacter pylori J99), this protein is GTP cyclohydrolase-2.